The primary structure comprises 559 residues: Glucose-6-phosphate isomerase (559 aa).

The active-site Proton donor is the glutamate 352. Catalysis depends on residues histidine 383 and lysine 511.

It belongs to the GPI family.

Its subcellular location is the cytoplasm. The enzyme catalyses alpha-D-glucose 6-phosphate = beta-D-fructose 6-phosphate. It functions in the pathway carbohydrate biosynthesis; gluconeogenesis. The protein operates within carbohydrate degradation; glycolysis; D-glyceraldehyde 3-phosphate and glycerone phosphate from D-glucose: step 2/4. Catalyzes the reversible isomerization of glucose-6-phosphate to fructose-6-phosphate. The polypeptide is Glucose-6-phosphate isomerase (Chlorobaculum tepidum (strain ATCC 49652 / DSM 12025 / NBRC 103806 / TLS) (Chlorobium tepidum)).